The primary structure comprises 120 residues: Large ribosomal subunit protein uL18 (120 aa).

This sequence belongs to the universal ribosomal protein uL18 family. As to quaternary structure, part of the 50S ribosomal subunit; part of the 5S rRNA/L5/L18/L25 subcomplex. Contacts the 5S and 23S rRNAs.

Its function is as follows. This is one of the proteins that bind and probably mediate the attachment of the 5S RNA into the large ribosomal subunit, where it forms part of the central protuberance. The sequence is that of Large ribosomal subunit protein uL18 from Afipia carboxidovorans (strain ATCC 49405 / DSM 1227 / KCTC 32145 / OM5) (Oligotropha carboxidovorans).